A 242-amino-acid polypeptide reads, in one-letter code: Biosynthetic peptidoglycan transglycosylase (242 aa).

A helical transmembrane segment spans residues 19 to 39 (LMVVLAIFWGGGIALFSVAPV).

It belongs to the glycosyltransferase 51 family.

The protein localises to the cell inner membrane. It catalyses the reaction [GlcNAc-(1-&gt;4)-Mur2Ac(oyl-L-Ala-gamma-D-Glu-L-Lys-D-Ala-D-Ala)](n)-di-trans,octa-cis-undecaprenyl diphosphate + beta-D-GlcNAc-(1-&gt;4)-Mur2Ac(oyl-L-Ala-gamma-D-Glu-L-Lys-D-Ala-D-Ala)-di-trans,octa-cis-undecaprenyl diphosphate = [GlcNAc-(1-&gt;4)-Mur2Ac(oyl-L-Ala-gamma-D-Glu-L-Lys-D-Ala-D-Ala)](n+1)-di-trans,octa-cis-undecaprenyl diphosphate + di-trans,octa-cis-undecaprenyl diphosphate + H(+). It participates in cell wall biogenesis; peptidoglycan biosynthesis. Peptidoglycan polymerase that catalyzes glycan chain elongation from lipid-linked precursors. This Escherichia coli O45:K1 (strain S88 / ExPEC) protein is Biosynthetic peptidoglycan transglycosylase.